The following is a 136-amino-acid chain: Large ribosomal subunit protein uL16 (136 aa).

Belongs to the universal ribosomal protein uL16 family. In terms of assembly, part of the 50S ribosomal subunit.

Functionally, binds 23S rRNA and is also seen to make contacts with the A and possibly P site tRNAs. This is Large ribosomal subunit protein uL16 from Orientia tsutsugamushi (strain Ikeda) (Rickettsia tsutsugamushi).